The sequence spans 333 residues: Phosphate acyltransferase (333 aa).

It belongs to the PlsX family. As to quaternary structure, homodimer. Probably interacts with PlsY.

It localises to the cytoplasm. The enzyme catalyses a fatty acyl-[ACP] + phosphate = an acyl phosphate + holo-[ACP]. Its pathway is lipid metabolism; phospholipid metabolism. Catalyzes the reversible formation of acyl-phosphate (acyl-PO(4)) from acyl-[acyl-carrier-protein] (acyl-ACP). This enzyme utilizes acyl-ACP as fatty acyl donor, but not acyl-CoA. The protein is Phosphate acyltransferase of Lactobacillus acidophilus (strain ATCC 700396 / NCK56 / N2 / NCFM).